The sequence spans 276 residues: Large ribosomal subunit protein uL2 (276 aa).

The interval 219–276 (TVRGSVMNPNDHPHGGGEGRAPIGRKSPMSPWGKPTLGYKTRQRNKPSDKYIVRKRKK) is disordered.

Belongs to the universal ribosomal protein uL2 family. Part of the 50S ribosomal subunit. Forms a bridge to the 30S subunit in the 70S ribosome.

In terms of biological role, one of the primary rRNA binding proteins. Required for association of the 30S and 50S subunits to form the 70S ribosome, for tRNA binding and peptide bond formation. It has been suggested to have peptidyltransferase activity; this is somewhat controversial. Makes several contacts with the 16S rRNA in the 70S ribosome. The protein is Large ribosomal subunit protein uL2 of Oceanobacillus iheyensis (strain DSM 14371 / CIP 107618 / JCM 11309 / KCTC 3954 / HTE831).